The following is a 385-amino-acid chain: Phosphotransferase FrzJ (385 aa).

ATP is bound by residues Asn38 and Lys59. Residue Asp245 is part of the active site.

This sequence belongs to the methylthioribose kinase family. In terms of assembly, monomer.

It carries out the reaction (1S,3S,6S,7S,8S,9S)-6-[(4-methoxyphenyl)methyl]-3-(methylamino)-5-azatricyclo[6.3.1.0(1,5)]dodecane-7,9-diol + ATP = (-)-FR901483 + ADP + 2 H(+). The protein operates within secondary metabolite biosynthesis. Its function is as follows. Phosphotransferase; part of the gene cluster that mediates the biosynthesis of the alkaloid (-)-FR901483, a potent immunosuppressant that shows efficacy in animal models and a probable inhibitor of purine nucleotide biosynthesis by targeting phosphoribosylpyrophosphate amidotransferase (PPAT). FrzJ catalyzes the last step of the pathway by phosphorylating the C4'-OH of dephospho-(-)-FR901483 to produce (-)-FR901483. The biosynthesis of (-)-FR901483 starts with the condensation of two L-tyrosines to yield (S,S)-dityrosyl-piperazine. This process occurs in 3 steps with the non-canonical nonribosomal peptide synthetase FrzA catalyzing the reduction of L-tyrosine into L-tyrosinal, the spontaneous condensation of 2 L-tyrosinal units, and the subsequent reduction by the NmrA-like family domain-containing oxidoreductase FrzB. The cytochrome P450 monooxygenase FrzC then performs coupling between N10 and C1' to morph the piperazine into a 1,4-diazabicyclo[3.2.1]octane spiro-fused to a 2,5-cyclohexadienone. The dienone portion is further reduced to cyclohexanone by the flavin-dependent reductase FrzD. The methyltranserases (MTs) FrzE and FrzF are then involved in the methylation at the C10' amine and the C4 phenolic oxygen, respectively. The order of the two MTs appear to be interchangeable. Cleavage of the C9-N10' bond by the dioxygenase FrzG then leads to formation of a conjugated iminium. In addition to the oxidation of C9, an additional dehydrogenation between C7 and C8 can occur to give a likely shunt product. The next biosynthetic step is the intramolecular aldol condensation catalyzed by the newly identified aldolase FrzH to yield an aza-tricyclic product with the formation of a C9-C3' bond. The short-chain dehydrogenase/reductase FrzI then produces dephospho-(-)-FR901483 that is phosphorylated at C4'-OH into (-)-FR901483 by the phosphotransferase FrzJ. In Cladobotryum sp, this protein is Phosphotransferase FrzJ.